The chain runs to 511 residues: GMP synthase [glutamine-hydrolyzing] (511 aa).

Residues 5 to 195 (MILVLDFGGQ…LYNICGCKGD (191 aa)) form the Glutamine amidotransferase type-1 domain. Catalysis depends on C82, which acts as the Nucleophile. Residues H169 and E171 contribute to the active site. Residues 196-386 (WKMSSFVENS…LGIPEDLVWR (191 aa)) form the GMPS ATP-PPase domain. 223–229 (SGGVDSS) provides a ligand contact to ATP.

As to quaternary structure, homodimer.

The catalysed reaction is XMP + L-glutamine + ATP + H2O = GMP + L-glutamate + AMP + diphosphate + 2 H(+). Its pathway is purine metabolism; GMP biosynthesis; GMP from XMP (L-Gln route): step 1/1. Catalyzes the synthesis of GMP from XMP. The sequence is that of GMP synthase [glutamine-hydrolyzing] from Ruminiclostridium cellulolyticum (strain ATCC 35319 / DSM 5812 / JCM 6584 / H10) (Clostridium cellulolyticum).